A 476-amino-acid polypeptide reads, in one-letter code: Aspartyl/glutamyl-tRNA(Asn/Gln) amidotransferase subunit B (476 aa).

The protein belongs to the GatB/GatE family. GatB subfamily. As to quaternary structure, heterotrimer of A, B and C subunits.

It catalyses the reaction L-glutamyl-tRNA(Gln) + L-glutamine + ATP + H2O = L-glutaminyl-tRNA(Gln) + L-glutamate + ADP + phosphate + H(+). The catalysed reaction is L-aspartyl-tRNA(Asn) + L-glutamine + ATP + H2O = L-asparaginyl-tRNA(Asn) + L-glutamate + ADP + phosphate + 2 H(+). Allows the formation of correctly charged Asn-tRNA(Asn) or Gln-tRNA(Gln) through the transamidation of misacylated Asp-tRNA(Asn) or Glu-tRNA(Gln) in organisms which lack either or both of asparaginyl-tRNA or glutaminyl-tRNA synthetases. The reaction takes place in the presence of glutamine and ATP through an activated phospho-Asp-tRNA(Asn) or phospho-Glu-tRNA(Gln). This is Aspartyl/glutamyl-tRNA(Asn/Gln) amidotransferase subunit B from Clostridium kluyveri (strain ATCC 8527 / DSM 555 / NBRC 12016 / NCIMB 10680 / K1).